Here is a 131-residue protein sequence, read N- to C-terminus: Global transcriptional regulator Spx 1 (131 aa).

Residues Cys-10 and Cys-13 are joined by a disulfide bond.

This sequence belongs to the ArsC family. Spx subfamily. In terms of assembly, interacts with the C-terminal domain of the alpha subunit of the RNAP.

Its subcellular location is the cytoplasm. Global transcriptional regulator that plays a key role in stress response and exerts either positive or negative regulation of genes. Acts by interacting with the C-terminal domain of the alpha subunit of the RNA polymerase (RNAP). This interaction can enhance binding of RNAP to the promoter region of target genes and stimulate their transcription, or block interaction of RNAP with activator. This is Global transcriptional regulator Spx 1 from Oceanobacillus iheyensis (strain DSM 14371 / CIP 107618 / JCM 11309 / KCTC 3954 / HTE831).